The sequence spans 208 residues: UPF0316 protein SERP1448 (208 aa).

Transmembrane regions (helical) follow at residues 8-28 (PWLMVLAIFIINVCYVTFLTM), 40-60 (VAAVVSFMEVLVYVVGLGLVM), and 66-86 (IQNIFAYALGFSVGIIVGMKI).

It belongs to the UPF0316 family.

It is found in the cell membrane. The sequence is that of UPF0316 protein SERP1448 from Staphylococcus epidermidis (strain ATCC 35984 / DSM 28319 / BCRC 17069 / CCUG 31568 / BM 3577 / RP62A).